Consider the following 205-residue polypeptide: Phosphoenolpyruvate guanylyltransferase (205 aa).

Residues T137, G153, and S156 each coordinate phosphoenolpyruvate.

It belongs to the CofC family.

It catalyses the reaction phosphoenolpyruvate + GTP + H(+) = enolpyruvoyl-2-diphospho-5'-guanosine + diphosphate. Its pathway is cofactor biosynthesis; coenzyme F420 biosynthesis. Its function is as follows. Guanylyltransferase that catalyzes the activation of phosphoenolpyruvate (PEP) as enolpyruvoyl-2-diphospho-5'-guanosine, via the condensation of PEP with GTP. It is involved in the biosynthesis of coenzyme F420, a hydride carrier cofactor. The protein is Phosphoenolpyruvate guanylyltransferase of Rubrobacter xylanophilus (strain DSM 9941 / JCM 11954 / NBRC 16129 / PRD-1).